A 3391-amino-acid polypeptide reads, in one-letter code: Genome polyprotein (3391 aa).

The interaction with host EXOC1 stretch occupies residues 1–15 (MNNQRKKARNTPFNM). The Cytoplasmic segment spans residues 1 to 101 (MNNQRKKARN…LNILNRRRRT (101 aa)). Positions 37-72 (MLQGRGPLKLFMALVAFLRFLTIPPTAGILKRWGTI) are hydrophobic; homodimerization of capsid protein C. Residues 101–114 (TAGMIIMLIPTVMA) constitute a propeptide, ER anchor for the capsid protein C, removed in mature form by serine protease NS3. Residues 102 to 122 (AGMIIMLIPTVMAFHLTTRNG) traverse the membrane as a helical segment. Residues 123-238 (EPHMIVSRQE…GAWKHAQRIE (116 aa)) lie on the Extracellular side of the membrane. Asn-183 carries an N-linked (GlcNAc...) asparagine; by host glycan. A helical membrane pass occupies residues 239–259 (TWILRHPGFTIMAAILAYTIG). The Cytoplasmic segment spans residues 260–265 (TTHFQR). The chain crosses the membrane as a helical span at residues 266 to 280 (ALIFILLTAVAPSMT). Residues 281–725 (MRCIGISNRD…LHQVFGAIYG (445 aa)) are Extracellular-facing. Intrachain disulfides connect Cys-283-Cys-310, Cys-340-Cys-401, Cys-354-Cys-385, and Cys-372-Cys-396. A glycan (N-linked (GlcNAc...) asparagine; by host) is linked at Asn-347. The fusion peptide stretch occupies residues 378–391 (DRGWGNGCGLFGKG). Residue Asn-433 is glycosylated (N-linked (GlcNAc...) asparagine; by host). Disulfide bonds link Cys-465–Cys-565 and Cys-582–Cys-613. The helical transmembrane segment at 726–746 (AAFSGVSWIMKILIGVIITWI) threads the bilayer. Residues 747-752 (GMNSRS) are Cytoplasmic-facing. The chain crosses the membrane as a helical span at residues 753–773 (TSLSVSLVLVGVVTLYLGVMV). Over 774 to 1195 (QADSGCVVSW…MVGATMTDDI (422 aa)) the chain is Extracellular. Disulfide bonds link Cys-779/Cys-790, Cys-830/Cys-918, Cys-954/Cys-998, Cys-1055/Cys-1104, Cys-1066/Cys-1088, and Cys-1087/Cys-1091. 2 N-linked (GlcNAc...) asparagine; by host glycosylation sites follow: Asn-905 and Asn-982. The chain crosses the membrane as a helical span at residues 1196-1220 (GMGVTYLALLAAFKVRPTFAAGLLL). Topologically, residues 1221–1226 (RKLTSK) are cytoplasmic. Residues 1227 to 1245 (ELMMTTIGIVLLSQSTIPE) traverse the membrane as a helical segment. Topologically, residues 1246–1269 (TILELTDALALGMMVLKMVRKMEK) are lumenal. Residues 1270 to 1290 (YQLAVTIMAILCVPNAVILQN) traverse the membrane as a helical segment. Position 1291 (Ala-1291) is a topological domain, cytoplasmic. A helical membrane pass occupies residues 1292–1310 (WKVSCTILAVVSVSPLFLT). The Lumenal segment spans residues 1311 to 1317 (SSQQKAD). Residues 1318-1338 (WIPLALTIKGLNPTAIFLTTL) traverse the membrane as a helical segment. The Cytoplasmic portion of the chain corresponds to 1339-1346 (SRTNKKRS). Residues 1347–1367 (WPLNEAIMAVGMVSILASSLL) traverse the membrane as a helical segment. At 1368-1370 (KND) the chain is on the lumenal side. The chain crosses the membrane as a helical span at residues 1371–1391 (IPMTGPLVAGGLLTVCYVLTG). Residues 1392 to 1447 (RSADLELERAADVKWEDQAEISGSSPILSITISEDGSMSIKNEEEEQTLTILIRTG) are Cytoplasmic-facing. An interacts with and activates NS3 protease region spans residues 1398–1437 (LERAADVKWEDQAEISGSSPILSITISEDGSMSIKNEEEE). The segment at residues 1448 to 1468 (LLVISGLFPVSIPITAAAWYL) is an intramembrane region (helical). Topologically, residues 1469–2147 (WEVKKQRAGV…LSELPETLET (679 aa)) are cytoplasmic. The Peptidase S7 domain occupies 1476–1653 (AGVLWDVPSP…EKSIEDNPEI (178 aa)). Active-site charge relay system; for serine protease NS3 activity residues include His-1526, Asp-1550, and Ser-1610. The Helicase ATP-binding domain occupies 1655–1811 (DDIFRKRKLT…QSNAPIMDEE (157 aa)). The important for RNA-binding stretch occupies residues 1659–1662 (RKRK). 1668-1675 (LHPGAGKT) provides a ligand contact to ATP. Residues 1759–1762 (DEAH) carry the DEAH box motif. The region spanning 1821 to 1988 (SGHEWVTDFK…IIPSMFEPER (168 aa)) is the Helicase C-terminal domain. Lys-1863 is subject to N6-acetyllysine; by host. Residues 2148 to 2168 (LLLLTLLATVTGGIFLFLMSG) traverse the membrane as a helical segment. At 2169-2170 (RG) the chain is on the lumenal side. The helical intramembrane region spans 2171 to 2191 (IGKMTLGMCCIITASILLWYA). A topological domain (lumenal) is located at residue Gln-2192. A helical membrane pass occupies residues 2193–2213 (IQPHWIAASIILEFFLIVLLI). The Cytoplasmic portion of the chain corresponds to 2214 to 2228 (PEPEKQRTPQDNQLT). A helical transmembrane segment spans residues 2229–2249 (YVVIAILTVVAATMANEMGFL). Residues 2250–2274 (EKTKKDLGLGSITTQQPESNILDID) lie on the Lumenal side of the membrane. An intramembrane region (helical) is located at residues 2275–2295 (LRPASAWTLYAVATTFVTPML). Residues 2296-2316 (RHSIENSSVNVSLTAIANQAT) lie on the Lumenal side of the membrane. N-linked (GlcNAc...) asparagine; by host glycosylation is found at Asn-2301 and Asn-2305. The segment at residues 2317-2337 (VLMGLGKGWPLSKMDIGVPLL) is an intramembrane region (helical). Topologically, residues 2338–2347 (AIGCYSQVNP) are lumenal. The helical transmembrane segment at 2348-2368 (ITLTAALFLLVAHYAIIGPGL) threads the bilayer. Residues 2369–2413 (QAKATREAQKRAAAGIMKNPTVDGITVIDLDPIPYDPKFEKQLGQ) are Cytoplasmic-facing. The chain crosses the membrane as a helical span at residues 2414–2434 (VMLLVLCVTQVLMMRTTWALC). At 2435–2459 (EALTLATGPISTLWEGNPGRFWNTT) the chain is on the lumenal side. A glycan (N-linked (GlcNAc...) asparagine; by host) is linked at Asn-2457. A helical membrane pass occupies residues 2460-2480 (IAVSMANIFRGSYLAGAGLLF). Over 2481 to 3391 (SIMKNTTNTR…KEEEEAGVLW (911 aa)) the chain is Cytoplasmic. The 263-residue stretch at 2493–2755 (TGNIGETLGE…DVDLGSGTRN (263 aa)) folds into the mRNA cap 0-1 NS5-type MT domain. Ser-2547 provides a ligand contact to S-adenosyl-L-methionine. A Phosphoserine modification is found at Ser-2547. Lys-2552 (for 2'-O-MTase activity) is an active-site residue. The SUMO-interacting motif motif lies at 2568-2571 (VVDL). Residues Gly-2577, Trp-2578, Thr-2595, Lys-2596, Asp-2622, and Val-2623 each contribute to the S-adenosyl-L-methionine site. Asp-2637 functions as the For 2'-O-MTase activity in the catalytic mechanism. Residue Ile-2638 coordinates S-adenosyl-L-methionine. Catalysis depends on for 2'-O-MTase activity residues Lys-2672 and Glu-2708. Tyr-2710 contacts S-adenosyl-L-methionine. The Zn(2+) site is built by Glu-2929, His-2933, Cys-2938, and Cys-2941. In terms of domain architecture, RdRp catalytic spans 3019-3168 (GAMYADDTAG…KPLDDRFASA (150 aa)). The Zn(2+) site is built by His-3203, Cys-3219, and Cys-3338.

In the N-terminal section; belongs to the class I-like SAM-binding methyltransferase superfamily. mRNA cap 0-1 NS5-type methyltransferase family. Homodimer. Interacts (via N-terminus) with host EXOC1 (via C-terminus); this interaction results in EXOC1 degradation through the proteasome degradation pathway. As to quaternary structure, forms heterodimers with envelope protein E in the endoplasmic reticulum and Golgi. In terms of assembly, homodimer; in the endoplasmic reticulum and Golgi. Interacts with protein prM. Interacts with non-structural protein 1. Homodimer; Homohexamer when secreted. Interacts with envelope protein E. Interacts with host PRKAA1. As to quaternary structure, interacts (via N-terminus) with serine protease NS3. In terms of assembly, forms a heterodimer with serine protease NS3. May form homooligomers. Forms a heterodimer with NS2B. Interacts with NS4B. Interacts with unphosphorylated RNA-directed RNA polymerase NS5; this interaction stimulates RNA-directed RNA polymerase NS5 guanylyltransferase activity. Interacts with host SHFL. As to quaternary structure, interacts with host MAVS; this interaction inhibits the synthesis of IFN-beta. Interacts with host MAVS; this interaction inhibits the synthesis of IFN-beta. Interacts with host SHFL. Interacts with host AUP1; the interaction occurs in the presence of Dengue virus NS4B and induces lipophagy which facilitates production of virus progeny particles. May interact with host SRPRA and SEC61G. In terms of assembly, interacts with serine protease NS. Homodimer. Interacts with host STAT2; this interaction inhibits the phosphorylation of the latter, and, when all viral proteins are present (polyprotein), targets STAT2 for degradation. Interacts with serine protease NS3. Interacts with host PAF1 complex; the interaction may prevent the recruitment of the PAF1 complex to interferon-responsive genes, and thus reduces the immune response. Post-translationally, specific enzymatic cleavages in vivo yield mature proteins. Cleavages in the lumen of endoplasmic reticulum are performed by host signal peptidase, whereas cleavages in the cytoplasmic side are performed by serine protease NS3. Signal cleavage at the 2K-4B site requires a prior NS3 protease-mediated cleavage at the 4A-2K site. In terms of processing, cleaved in post-Golgi vesicles by a host furin, releasing the mature small envelope protein M, and peptide pr. This cleavage is incomplete as up to 30% of viral particles still carry uncleaved prM. N-glycosylated. Post-translationally, N-glycosylated. The excreted form is glycosylated and this is required for efficient secretion of the protein from infected cells. In terms of processing, acetylated by host KAT5. Acetylation modulates NS3 RNA-binding and unwinding activities and plays an important positive role for viral replication. Sumoylation of RNA-directed RNA polymerase NS5 increases NS5 protein stability allowing proper viral RNA replication. Post-translationally, phosphorylated on serines residues. This phosphorylation may trigger NS5 nuclear localization.

The protein resides in the virion. It localises to the host nucleus. It is found in the host cytoplasm. The protein localises to the host perinuclear region. Its subcellular location is the secreted. The protein resides in the virion membrane. It localises to the host endoplasmic reticulum membrane. It is found in the host mitochondrion. The enzyme catalyses Selective hydrolysis of -Xaa-Xaa-|-Yaa- bonds in which each of the Xaa can be either Arg or Lys and Yaa can be either Ser or Ala.. It catalyses the reaction RNA(n) + a ribonucleoside 5'-triphosphate = RNA(n+1) + diphosphate. The catalysed reaction is a ribonucleoside 5'-triphosphate + H2O = a ribonucleoside 5'-diphosphate + phosphate + H(+). It carries out the reaction ATP + H2O = ADP + phosphate + H(+). The enzyme catalyses a 5'-end (5'-triphosphoguanosine)-ribonucleoside in mRNA + S-adenosyl-L-methionine = a 5'-end (N(7)-methyl 5'-triphosphoguanosine)-ribonucleoside in mRNA + S-adenosyl-L-homocysteine. It catalyses the reaction a 5'-end (N(7)-methyl 5'-triphosphoguanosine)-ribonucleoside in mRNA + S-adenosyl-L-methionine = a 5'-end (N(7)-methyl 5'-triphosphoguanosine)-(2'-O-methyl-ribonucleoside) in mRNA + S-adenosyl-L-homocysteine + H(+). Plays a role in virus budding by binding to the cell membrane and gathering the viral RNA into a nucleocapsid that forms the core of a mature virus particle. During virus entry, may induce genome penetration into the host cytoplasm after hemifusion induced by the surface proteins. Can migrate to the cell nucleus where it modulates host functions. Overcomes the anti-viral effects of host EXOC1 by sequestering and degrading the latter through the proteasome degradation pathway. Its function is as follows. Inhibits RNA silencing by interfering with host Dicer. Functionally, prevents premature fusion activity of envelope proteins in trans-Golgi by binding to envelope protein E at pH6.0. After virion release in extracellular space, gets dissociated from E dimers. In terms of biological role, acts as a chaperone for envelope protein E during intracellular virion assembly by masking and inactivating envelope protein E fusion peptide. prM is the only viral peptide matured by host furin in the trans-Golgi network probably to avoid catastrophic activation of the viral fusion activity in acidic Golgi compartment prior to virion release. prM-E cleavage is inefficient, and many virions are only partially matured. These uncleaved prM would play a role in immune evasion. May play a role in virus budding. Exerts cytotoxic effects by activating a mitochondrial apoptotic pathway through M ectodomain. May display a viroporin activity. Its function is as follows. Binds to host cell surface receptor and mediates fusion between viral and cellular membranes. Envelope protein is synthesized in the endoplasmic reticulum in the form of heterodimer with protein prM. They play a role in virion budding in the ER, and the newly formed immature particle is covered with 60 spikes composed of heterodimer between precursor prM and envelope protein E. The virion is transported to the Golgi apparatus where the low pH causes dissociation of PrM-E heterodimers and formation of E homodimers. prM-E cleavage is inefficient, and many virions are only partially matured. These uncleaved prM would play a role in immune evasion. Functionally, involved in immune evasion, pathogenesis and viral replication. Once cleaved off the polyprotein, is targeted to three destinations: the viral replication cycle, the plasma membrane and the extracellular compartment. Essential for viral replication. Required for formation of the replication complex and recruitment of other non-structural proteins to the ER-derived membrane structures. Excreted as a hexameric lipoparticle that plays a role against host immune response. Antagonizing the complement function. Binds to the host macrophages and dendritic cells. Inhibits signal transduction originating from Toll-like receptor 3 (TLR3). Mediates complement activation, which may contribute to the pathogenesis of the vascular leakage that occurs in severe dengue disease. Activates autophagy through the AMPK/ERK/mTOR signaling pathway. Mechanistically, acts as the assembly platform for STK11-AMPK interactions and promotes STK11-AMPK interactions. In turn, promotes phosphorylation of the AMPK kinase structural domain and activates AMPK, thereby positively regulating the AMPK/ERK/mTOR signaling pathway and inducing autophagy. In terms of biological role, disrupts the host endothelial glycocalyx layer of host pulmonary microvascular endothelial cells, inducing degradation of sialic acid and shedding of heparan sulfate proteoglycans. NS1 induces expression of sialidases, heparanase, and activates cathepsin L, which activates heparanase via enzymatic cleavage. These effects are probably linked to the endothelial hyperpermeability observed in severe dengue disease. Component of the viral RNA replication complex that functions in virion assembly and antagonizes the host immune response. Its function is as follows. Required cofactor for the serine protease function of NS3. May have membrane-destabilizing activity and form viroporins. Functionally, displays three enzymatic activities: serine protease, NTPase and RNA helicase. NS3 serine protease, in association with NS2B, performs its autocleavage and cleaves the polyprotein at dibasic sites in the cytoplasm: C-prM, NS2A-NS2B, NS2B-NS3, NS3-NS4A, NS4A-2K and NS4B-NS5. NS3 RNA helicase binds RNA and unwinds dsRNA in the 3' to 5' direction. In terms of biological role, regulates the ATPase activity of the NS3 helicase activity. NS4A allows NS3 helicase to conserve energy during unwinding. Plays a role in the inhibition of the host innate immune response. Interacts with host MAVS and thereby prevents the interaction between RIGI and MAVS. In turn, IFN-beta production is impaired. Interacts with host AUP1 which mediates induction of lipophagy in host cells and facilitates production of virus progeny particles. Functions as a signal peptide for NS4B and is required for the interferon antagonism activity of the latter. Its function is as follows. Induces the formation of ER-derived membrane vesicles where the viral replication takes place. Inhibits interferon (IFN)-induced host STAT1 phosphorylation and nuclear translocation, thereby preventing the establishment of cellular antiviral state by blocking the IFN-alpha/beta pathway. Functionally, replicates the viral (+) and (-) RNA genome, and performs the capping of genomes in the cytoplasm. NS5 methylates viral RNA cap at guanine N-7 and ribose 2'-O positions. Besides its role in RNA genome replication, also prevents the establishment of cellular antiviral state by blocking the interferon-alpha/beta (IFN-alpha/beta) signaling pathway. Inhibits host TYK2 and STAT2 phosphorylation, thereby preventing activation of JAK-STAT signaling pathway. May reduce immune responses by preventing the recruitment of the host PAF1 complex to interferon-responsive genes. This chain is Genome polyprotein, found in Aedimorphus (Red guenon).